The sequence spans 242 residues: GLIPR1-like protein 1 (242 aa).

Residues 1-22 form the signal peptide; it reads MALKNKFSCLWILGLCLVATTS. Positions 39-171 constitute an SCP domain; it reads EAHNEWRGKV…ASTAIFVCNY (133 aa). A glycan (N-linked (GlcNAc...) asparagine) is linked at N119. G221 carries GPI-anchor amidated glycine lipidation. Positions 222-242 are cleaved as a propeptide — removed in mature form; that stretch reads RAPQQTAFNPFSLGFLLLRIF.

It belongs to the CRISP family. As to quaternary structure, part of a oolemmal binding multimeric complex (IZUMO1 complex) composed at least of IZUMO1 and GLIPR1L1; the complex assemblage is influenced by the maturation status of the male germ cell. Interacts with IZUMO1. In terms of processing, N-glycosylated. N-glycosylation decreases during the transit in the caput. In terms of tissue distribution, highly expressed in testis.

It is found in the cytoplasmic vesicle. Its subcellular location is the secretory vesicle. The protein localises to the acrosome. The protein resides in the cell membrane. It localises to the membrane raft. It is found in the secreted. Required for optimal fertilization at the stage of sperm-oocyte fusion, plays a role in optimizing acrosome function, the translocation of IZUMO1 during the acrosome reaction and the fertilization process. Component of epididymosomes, one type of membranous microvesicules which mediate the transfer of lipids and proteins to spermatozoa plasma membrane during epididymal maturation. Also component of the CD9-positive microvesicules found in the cauda region. This is GLIPR1-like protein 1 (GLIPR1L1) from Homo sapiens (Human).